The sequence spans 321 residues: Glucokinase (321 aa).

Position 8–13 (glycine 8–threonine 13) interacts with ATP.

This sequence belongs to the bacterial glucokinase family.

It localises to the cytoplasm. The enzyme catalyses D-glucose + ATP = D-glucose 6-phosphate + ADP + H(+). This Cronobacter sakazakii (strain ATCC BAA-894) (Enterobacter sakazakii) protein is Glucokinase.